The following is a 124-amino-acid chain: Small ribosomal subunit protein uS12 (124 aa).

At D89 the chain carries 3-methylthioaspartic acid.

It belongs to the universal ribosomal protein uS12 family. In terms of assembly, part of the 30S ribosomal subunit. Contacts proteins S8 and S17. May interact with IF1 in the 30S initiation complex.

In terms of biological role, with S4 and S5 plays an important role in translational accuracy. Interacts with and stabilizes bases of the 16S rRNA that are involved in tRNA selection in the A site and with the mRNA backbone. Located at the interface of the 30S and 50S subunits, it traverses the body of the 30S subunit contacting proteins on the other side and probably holding the rRNA structure together. The combined cluster of proteins S8, S12 and S17 appears to hold together the shoulder and platform of the 30S subunit. The sequence is that of Small ribosomal subunit protein uS12 from Prochlorococcus marinus (strain SARG / CCMP1375 / SS120).